The chain runs to 300 residues: MNTTSEVIVGTGFQAIRQQLAQMHPELNFVEQLWLAYYKWFDNDVVATGLMSFLLHELIYFGRCIPWMIIDAMPYFRRWKIQPKKVPTLAEQWECTRLVLLSHFTVELPQIWLFDPMCATFGLSTSVPFPPVTKMIWQITLFFFLEDTWHYWAHRLFHYGIFYRFIHKVHHRYSAPFGLSAEYAHPLEIILLGAGTVFVPLMWCYFTHDLHLVTMYIWITLRLFQAVDSHAGYDFPWSLNKFLPIWAGADHHDYHHMAFKDNFSSSFRWWDAVLKTDQNYHQFKARRLAAKYEAESKKAK.

One can recognise a Fatty acid hydroxylase domain in the interval 140–276 (TLFFFLEDTW…FRWWDAVLKT (137 aa)). A Histidine box-1 motif is present at residues 154 to 158 (HRLFH). The Histidine box-2 signature appears at 167 to 171 (HKVHH). The helical transmembrane segment at 186–206 (PLEIILLGAGTVFVPLMWCYF) threads the bilayer. The Histidine box-3 motif lies at 251-257 (HHDYHHM).

This sequence belongs to the sterol desaturase family. Heterotetramer of erg25, erg26, erg27 and erg28. Erg28 acts as a scaffold to tether erg27 and other 4,4-demethylation-related enzymes, forming a demethylation enzyme complex, in the endoplasmic reticulum. The cofactor is Fe cation.

It is found in the endoplasmic reticulum membrane. It carries out the reaction 4,4-dimethyl-5alpha-cholesta-8,24-dien-3beta-ol + 6 Fe(II)-[cytochrome b5] + 3 O2 + 5 H(+) = 4beta-methylzymosterol-4alpha-carboxylate + 6 Fe(III)-[cytochrome b5] + 4 H2O. The enzyme catalyses 4alpha-methylzymosterol + 6 Fe(II)-[cytochrome b5] + 3 O2 + 5 H(+) = 4alpha-carboxyzymosterol + 6 Fe(III)-[cytochrome b5] + 4 H2O. It participates in steroid biosynthesis; zymosterol biosynthesis; zymosterol from lanosterol: step 3/6. It functions in the pathway steroid metabolism; ergosterol biosynthesis. In terms of biological role, C-4 methylsterol oxidase; part of the third module of ergosterol biosynthesis pathway that includes by the late steps of the pathway. Erg25 is a catalytic component of the C-4 demethylation complex that catalyzes the three-step monooxygenation required for the demethylation of 4,4-dimethyl and 4alpha-methylsterols. The third module or late pathway involves the ergosterol synthesis itself through consecutive reactions that mainly occur in the endoplasmic reticulum (ER) membrane. Firstly, the squalene synthase erg9 catalyzes the condensation of 2 farnesyl pyrophosphate moieties to form squalene, which is the precursor of all steroids. Secondly, squalene is converted into lanosterol by the consecutive action of the squalene epoxidase erg1 and the lanosterol synthase erg7. The lanosterol 14-alpha-demethylase erg11/cyp1 catalyzes C14-demethylation of lanosterol to produce 4,4'-dimethyl cholesta-8,14,24-triene-3-beta-ol. In the next steps, a complex process involving various demethylation, reduction and desaturation reactions catalyzed by the C-14 reductase erg24 and the C-4 demethylation complex erg25-erg26-erg27 leads to the production of zymosterol. Erg28 likely functions in the C-4 demethylation complex reaction by tethering erg26 and Erg27 to the endoplasmic reticulum or to facilitate interaction between these proteins. Then, the sterol 24-C-methyltransferase erg6 catalyzes the methyl transfer from S-adenosyl-methionine to the C-24 of zymosterol to form fecosterol. The C-8 sterol isomerase erg2 catalyzes the reaction which results in unsaturation at C-7 in the B ring of sterols and thus converts fecosterol to episterol. The sterol-C5-desaturases erg31 and erg32 then catalyze the introduction of a C-5 double bond in the B ring to produce 5-dehydroepisterol. The C-22 sterol desaturase erg5 further converts 5-dehydroepisterol into ergosta-5,7,22,24(28)-tetraen-3beta-ol by forming the C-22(23) double bond in the sterol side chain. Finally, ergosta-5,7,22,24(28)-tetraen-3beta-ol is substrate of the C-24(28) sterol reductase erg4 to produce ergosterol. In the genus Schizosaccharomyces, a second route exists between lanosterol and fecosterol, via the methylation of lanosterol to eburicol by erg6, followed by C14-demethylation by erg11/cyp1 and C4-demethylation by the demethylation complex erg25-erg26-erg27. This Schizosaccharomyces pombe (strain 972 / ATCC 24843) (Fission yeast) protein is C-4 methylsterol oxidase erg25.